The primary structure comprises 174 residues: ATP synthase subunit delta (174 aa).

It belongs to the ATPase delta chain family. In terms of assembly, F-type ATPases have 2 components, F(1) - the catalytic core - and F(0) - the membrane proton channel. F(1) has five subunits: alpha(3), beta(3), gamma(1), delta(1), epsilon(1). F(0) has three main subunits: a(1), b(2) and c(10-14). The alpha and beta chains form an alternating ring which encloses part of the gamma chain. F(1) is attached to F(0) by a central stalk formed by the gamma and epsilon chains, while a peripheral stalk is formed by the delta and b chains.

The protein resides in the cell inner membrane. Its function is as follows. F(1)F(0) ATP synthase produces ATP from ADP in the presence of a proton or sodium gradient. F-type ATPases consist of two structural domains, F(1) containing the extramembraneous catalytic core and F(0) containing the membrane proton channel, linked together by a central stalk and a peripheral stalk. During catalysis, ATP synthesis in the catalytic domain of F(1) is coupled via a rotary mechanism of the central stalk subunits to proton translocation. This protein is part of the stalk that links CF(0) to CF(1). It either transmits conformational changes from CF(0) to CF(1) or is implicated in proton conduction. The protein is ATP synthase subunit delta of Helicobacter hepaticus (strain ATCC 51449 / 3B1).